The primary structure comprises 159 residues: Intron-encoded endonuclease ai4 (159 aa).

This sequence belongs to the LAGLIDADG endonuclease family.

It is found in the mitochondrion. In terms of biological role, mitochondrial DNA endonuclease involved in intron homing. The polypeptide is Intron-encoded endonuclease ai4 (ai4) (Dictyostelium discoideum (Social amoeba)).